Consider the following 520-residue polypeptide: Cytochrome P450 1A1 (520 aa).

Residue Phe-230 coordinates substrate. Position 464 (Cys-464) interacts with heme.

It belongs to the cytochrome P450 family. Requires heme as cofactor.

It is found in the endoplasmic reticulum membrane. The protein resides in the microsome membrane. The enzyme catalyses an organic molecule + reduced [NADPH--hemoprotein reductase] + O2 = an alcohol + oxidized [NADPH--hemoprotein reductase] + H2O + H(+). Cytochromes P450 are a group of heme-thiolate monooxygenases. In liver microsomes, this enzyme is involved in an NADPH-dependent electron transport pathway. It oxidizes a variety of structurally unrelated compounds, including steroids, fatty acids, and xenobiotics. The chain is Cytochrome P450 1A1 (cyp1a1) from Dicentrarchus labrax (European seabass).